A 458-amino-acid polypeptide reads, in one-letter code: MRHQWVANRRGQSNVSQMHYARQGQITEEMDYVAKRENLPADLIREEVARGRMIIPANVNHVNLEPMAIGIASKCKVNANIGASPNSSNIEEELDKLRLAVKYGADTVMDLSTGGGNLDEIRTAIINESSVPIGTVPIYQALESVHGNIENLTADDFLHIIDKHAQQGVDYQTIHAGILIEHLPLVRDRITGIVSRGGGILARWMLHHHKQNPLYTRFNDVIEIFKKHDVSFSLGDSLRPGCTHDASDDAQLAELKTLGQLTRRAWEHDVQVMVEGPGHVPMDQIEFNVRKQMEECSEAPFYVLGPLVTDIAPGYDHITSAIGAAMAGWYGTAMLCYVTPKEHLGLPDAEDVRNGLIAYKIAAHAADIARHRPGARDRDDQLSEARYNFDWNRQFELSLDPERAREYHDETLPADIYKTAEFCSMCGPKFCPMQTKVDADALTELEKFLAKDQVGSAR.

Substrate-binding positions include N80, M109, Y139, H175, 195 to 197, 236 to 239, and E275; these read SRG and DSLR. Residue H279 participates in Zn(2+) binding. Residue Y302 participates in substrate binding. H343 lines the Zn(2+) pocket. [4Fe-4S] cluster contacts are provided by C423, C426, and C431.

It belongs to the ThiC family. Requires [4Fe-4S] cluster as cofactor.

It catalyses the reaction 5-amino-1-(5-phospho-beta-D-ribosyl)imidazole + S-adenosyl-L-methionine = 4-amino-2-methyl-5-(phosphooxymethyl)pyrimidine + CO + 5'-deoxyadenosine + formate + L-methionine + 3 H(+). It participates in cofactor biosynthesis; thiamine diphosphate biosynthesis. Its function is as follows. Catalyzes the synthesis of the hydroxymethylpyrimidine phosphate (HMP-P) moiety of thiamine from aminoimidazole ribotide (AIR) in a radical S-adenosyl-L-methionine (SAM)-dependent reaction. In Acaryochloris marina (strain MBIC 11017), this protein is Phosphomethylpyrimidine synthase.